The chain runs to 305 residues: MAKRDILSVLDMKNDLDEIINLSIELKKNRYRSYESLRNKMLGLIFEKPSTRTRTSLEVAIDQLGGHAVYLNPSEMQLGRGETISDTGHVLSRFLDAIAYRAFDHKNVVELARSTSIPVINALDDVEHPLQIVADFMTVKEKKGKFSGLKFSYIGDGNNMANSLMLGAAILGVDIYVATPHGYEPKSEFVDKAKQVAKERGSKVIITNDAIEAAKDADVIYTDVWISMGEESKRGEKEKAFTKYQINSDLVSNAKKDYIFMHCLPAHRGLEVTDDVADSINSVIFDEAENRLHSEKGVLYKLLSY.

Carbamoyl phosphate is bound by residues 50–53, Q77, R101, and 128–131; these read STRT and HPLQ. L-ornithine contacts are provided by residues N159, D223, and 227-228; that span reads SM. Carbamoyl phosphate-binding positions include 263–264 and R291; that span reads CL.

This sequence belongs to the aspartate/ornithine carbamoyltransferase superfamily. OTCase family.

The protein localises to the cytoplasm. The enzyme catalyses carbamoyl phosphate + L-ornithine = L-citrulline + phosphate + H(+). Its pathway is amino-acid degradation; L-arginine degradation via ADI pathway; carbamoyl phosphate from L-arginine: step 2/2. Its function is as follows. Reversibly catalyzes the transfer of the carbamoyl group from carbamoyl phosphate (CP) to the N(epsilon) atom of ornithine (ORN) to produce L-citrulline. In Thermoplasma volcanium (strain ATCC 51530 / DSM 4299 / JCM 9571 / NBRC 15438 / GSS1), this protein is Ornithine carbamoyltransferase, catabolic.